Consider the following 387-residue polypeptide: MTSHPVFIDLSLDEQVQELRKYFKKLGAEISSEKSNKGVEDDLHKIIGVCDVCFKDGEPSQIDGILNSIVSIMITIPLDRGENIVLAYCEKMTKAPNLPLGKVCLQSLWRLFNNLDTASPLRYHVYYHLVQVAKQCEQVLEVFTGVDQLKSQFANCPPSSEQMQKLYRLLHDVTKDTNLELSSKVMIELLGTYTADNACVAREDAMKCIVTALADPNTFLLDPLLALKPVRFLEGDLIHDLLSIFVSEKLPAYVQFYEDHREFVNSQGLNHEQNMKKMRLLTFMQLAESSPEMTFETLTKELQINEDEVEPFVIEVLKTKLVRARLDQANHKVHITSTMHRTFGAPQWEQLRDLLQAWKENLSTVREGLTSVSSAQLDLARSQKLIH.

The PCI domain maps to 181–340; it reads LSSKVMIELL…HKVHITSTMH (160 aa).

The protein belongs to the eIF-3 subunit M family. Component of the eukaryotic translation initiation factor 3 (eIF-3) complex. The eIF-3 complex interacts with pix.

It is found in the cytoplasm. It localises to the golgi apparatus. Its function is as follows. Component of the eukaryotic translation initiation factor 3 (eIF-3) complex, which is involved in protein synthesis of a specialized repertoire of mRNAs and, together with other initiation factors, stimulates binding of mRNA and methionyl-tRNAi to the 40S ribosome. The eIF-3 complex specifically targets and initiates translation of a subset of mRNAs involved in cell proliferation. This is Eukaryotic translation initiation factor 3 subunit M from Drosophila erecta (Fruit fly).